We begin with the raw amino-acid sequence, 88 residues long: Molybdopterin synthase sulfur carrier subunit (88 aa).

Glycine 88 carries the post-translational modification 1-thioglycine; alternate. Glycine 88 is subject to Glycyl adenylate; alternate.

It belongs to the MoaD family. MOCS2A subfamily. Heterotetramer; composed of 2 small (MOCS2A) and 2 large (MOCS2B) subunits. C-terminal thiocarboxylation occurs in 2 steps, it is first acyl-adenylated (-COAMP) via the hesA/moeB/thiF part of MOCS3, then thiocarboxylated (-COSH) via the rhodanese domain of MOCS3.

Its subcellular location is the cytoplasm. It localises to the cytosol. Its pathway is cofactor biosynthesis; molybdopterin biosynthesis. Acts as a sulfur carrier required for molybdopterin biosynthesis. Component of the molybdopterin synthase complex that catalyzes the conversion of precursor Z into molybdopterin by mediating the incorporation of 2 sulfur atoms into precursor Z to generate a dithiolene group. In the complex, serves as sulfur donor by being thiocarboxylated (-COSH) at its C-terminus by MOCS3. After interaction with MOCS2B, the sulfur is then transferred to precursor Z to form molybdopterin. This chain is Molybdopterin synthase sulfur carrier subunit, found in Mus musculus (Mouse).